The sequence spans 107 residues: U20-lycotoxin-Ls1b (107 aa).

A signal peptide spans 1-30 (MFSTSDQVSKMNSRILSALLILGIATCVIA). One can recognise a WAP domain in the interval 31 to 76 (GGFCPKSRHPQCNLSYKINDCCAQSDCRVGSVCCVEGCGNVCRAES). 5 cysteine pairs are disulfide-bonded: cysteine 34–cysteine 64, cysteine 42–cysteine 68, cysteine 51–cysteine 63, cysteine 52–cysteine 90, and cysteine 57–cysteine 72.

This sequence belongs to the venom protein 11 family. 02 (wap-2) subfamily. Contains 5 disulfide bonds. In terms of tissue distribution, expressed by the venom gland.

The protein resides in the secreted. Its function is as follows. Has antibacterial activity. The protein is U20-lycotoxin-Ls1b of Lycosa singoriensis (Wolf spider).